Consider the following 953-residue polypeptide: Isoleucine--tRNA ligase (953 aa).

A 'HIGH' region motif is present at residues P58–H68. E577 is a binding site for L-isoleucyl-5'-AMP. A 'KMSKS' region motif is present at residues K618 to S622. Residue K621 coordinates ATP. Zn(2+) contacts are provided by C916, C919, C936, and C939.

It belongs to the class-I aminoacyl-tRNA synthetase family. IleS type 1 subfamily. In terms of assembly, monomer. It depends on Zn(2+) as a cofactor.

The protein localises to the cytoplasm. It carries out the reaction tRNA(Ile) + L-isoleucine + ATP = L-isoleucyl-tRNA(Ile) + AMP + diphosphate. In terms of biological role, catalyzes the attachment of isoleucine to tRNA(Ile). As IleRS can inadvertently accommodate and process structurally similar amino acids such as valine, to avoid such errors it has two additional distinct tRNA(Ile)-dependent editing activities. One activity is designated as 'pretransfer' editing and involves the hydrolysis of activated Val-AMP. The other activity is designated 'posttransfer' editing and involves deacylation of mischarged Val-tRNA(Ile). This chain is Isoleucine--tRNA ligase, found in Aeromonas salmonicida (strain A449).